The chain runs to 190 residues: Dynein axonemal light chain 1 (190 aa).

Alanine 2 is modified (N-acetylalanine). LRR repeat units lie at residues 49–70, 71–92, 94–115, and 116–137; these read NCEKLSLSTNCIEKIANLNGLK, NLRILSLGRNNIKNLNGLEAVG, TLEELWISYNFIEKLKGIHVMK, and KLKILYMSNNLVKDWAEFVKLA. Residue serine 56 is modified to Phosphoserine. One can recognise an LRRCT domain in the interval 150-190; that stretch reads NPLEEKHSAEGNWVEEATKRVPKLKKLDGTPVIKEDEEEDN.

The protein belongs to the dynein light chain LC1-type family. Interacts with ZMYND10 (via C-terminus). Interacts with DNAH5, a outer arm dynein heavy chain. Interacts with tubulin located within the A-tubule of the outer doublets in a ATP-independent manner.

The protein localises to the cytoplasm. It is found in the cytoskeleton. It localises to the cilium axoneme. Part of the multisubunit axonemal ATPase complexes that generate the force for cilia motility and govern beat frequency. Component of the outer arm dynein (ODA). May be involved in a mechanosensory feedback mechanism controlling ODA activity based on external conformational cues by tethering the outer arm dynein heavy chain (DNAH5) to the microtubule within the axoneme. Important for ciliary function in the airways and for the function of the cilia that produce the nodal flow essential for the determination of the left-right asymmetry. The chain is Dynein axonemal light chain 1 (DNAL1) from Bos taurus (Bovine).